Reading from the N-terminus, the 231-residue chain is Chromosome partition protein MukE (231 aa).

A disordered region spans residues 197–231 (RDGEAMPIEGGLSLDDSENDETSDNSAEGTGDEQP).

This sequence belongs to the MukE family. As to quaternary structure, interacts, and probably forms a ternary complex, with MukF and MukB. The complex formation is stimulated by calcium or magnesium.

The protein resides in the cytoplasm. Its subcellular location is the nucleoid. Its function is as follows. Involved in chromosome condensation, segregation and cell cycle progression. May participate in facilitating chromosome segregation by condensation DNA from both sides of a centrally located replisome during cell division. Probably acts via its interaction with MukB and MukF. The sequence is that of Chromosome partition protein MukE from Photorhabdus laumondii subsp. laumondii (strain DSM 15139 / CIP 105565 / TT01) (Photorhabdus luminescens subsp. laumondii).